Consider the following 66-residue polypeptide: DNA-directed RNA polymerase subunit Rpo10 (66 aa).

Positions 7, 10, 44, and 45 each coordinate Zn(2+).

The protein belongs to the archaeal Rpo10/eukaryotic RPB10 RNA polymerase subunit family. Part of the 13-subunit RNA polymerase complex. Requires Zn(2+) as cofactor.

The protein localises to the cytoplasm. It catalyses the reaction RNA(n) + a ribonucleoside 5'-triphosphate = RNA(n+1) + diphosphate. Functionally, DNA-dependent RNA polymerase (RNAP) catalyzes the transcription of DNA into RNA using the four ribonucleoside triphosphates as substrates. The protein is DNA-directed RNA polymerase subunit Rpo10 of Sulfolobus acidocaldarius (strain ATCC 33909 / DSM 639 / JCM 8929 / NBRC 15157 / NCIMB 11770).